The sequence spans 923 residues: Carnitine O-acetyltransferase YAT2 (923 aa).

Over residues 1–11 the composition is skewed to polar residues; sequence MSSGSTIVSSD. 2 disordered regions span residues 1–21 and 197–232; these read MSSGSTIVSSDKSGRTFKHEE and NKPYTASDLEDPDYSSDEDDNDEPTQKDFDDRKRKH. Serine 2 is subject to N-acetylserine. Residues 12–21 show a composition bias toward basic and acidic residues; sequence KSGRTFKHEE. Acidic residues predominate over residues 204 to 219; that stretch reads DLEDPDYSSDEDDNDE. Residues 220 to 232 show a composition bias toward basic and acidic residues; sequence PTQKDFDDRKRKH. CoA-binding positions include 529–541 and serine 567; that span reads GRRSAQRLGVKPD. Serine 576 lines the (R)-carnitine pocket. The tract at residues 763–787 is disordered; the sequence is NAVNNPPKRNGHTVNGSRKTSSSSQ. Residues 774-787 are compositionally biased toward polar residues; that stretch reads HTVNGSRKTSSSSQ. Serine 783 is subject to Phosphoserine.

The protein belongs to the carnitine/choline acetyltransferase family.

The protein resides in the cytoplasm. The enzyme catalyses (R)-carnitine + acetyl-CoA = O-acetyl-(R)-carnitine + CoA. Functionally, carnitine O-acetyltransferase involved in the shutteling of acetyl-CoA in the cell. The polypeptide is Carnitine O-acetyltransferase YAT2 (Saccharomyces cerevisiae (strain ATCC 204508 / S288c) (Baker's yeast)).